The primary structure comprises 511 residues: Caspase-8 (511 aa).

The propeptide occupies 1–242 (MSGHNILTQL…MDGNGIANES (242 aa)). Residues H352 and C393 contribute to the active site. Positions 406–415 (KINASTKSPC) are excised as a propeptide.

It belongs to the peptidase C14A family. Heterotetramer that consists of two anti-parallel arranged heterodimers, each one formed by a 15 kDa (caspase-8 subunit p15) and a 10 kDa (caspase-8 subunit p10) subunit. Interacts with the N-terminus of Fadd.

It localises to the cytoplasm. The enzyme catalyses Strict requirement for Asp at position P1 and has a preferred cleavage sequence of (Leu/Asp/Val)-Glu-Thr-Asp-|-(Gly/Ser/Ala).. In terms of biological role, effector of the programmed cell death (PCD) activators rpr, grim and W. May play an apoptotic role in the germline as well as soma. Role in immune response, required to resist Gram-negative bacterial infections by regulating DptA. Fadd interacts with Dredd, Fadd promotes cleavage of Dredd and is necessary and sufficient for enhancing Dredd-induced apoptosis. The chain is Caspase-8 from Drosophila pseudoobscura pseudoobscura (Fruit fly).